A 509-amino-acid chain; its full sequence is Steroid 17-alpha-hydroxylase/17,20 lyase (509 aa).

Substrate is bound at residue N202. C442 is a heme binding site.

This sequence belongs to the cytochrome P450 family. Heme is required as a cofactor.

It localises to the endoplasmic reticulum membrane. Its subcellular location is the microsome membrane. It catalyses the reaction a C21-steroid + reduced [NADPH--hemoprotein reductase] + O2 = a 17alpha-hydroxy-C21-steroid + oxidized [NADPH--hemoprotein reductase] + H2O + H(+). The catalysed reaction is progesterone + reduced [NADPH--hemoprotein reductase] + O2 = 17alpha-hydroxyprogesterone + oxidized [NADPH--hemoprotein reductase] + H2O + H(+). It carries out the reaction pregnenolone + reduced [NADPH--hemoprotein reductase] + O2 = 17alpha-hydroxypregnenolone + oxidized [NADPH--hemoprotein reductase] + H2O + H(+). The enzyme catalyses 17alpha-hydroxyprogesterone + reduced [NADPH--hemoprotein reductase] + O2 = androst-4-ene-3,17-dione + acetate + oxidized [NADPH--hemoprotein reductase] + H2O + 2 H(+). It catalyses the reaction 17alpha-hydroxyprogesterone + reduced [NADPH--hemoprotein reductase] + O2 = 16alpha,17alpha-dihydroxyprogesterone + oxidized [NADPH--hemoprotein reductase] + H2O + H(+). The catalysed reaction is 16alpha,17alpha-dihydroxyprogesterone + reduced [NADPH--hemoprotein reductase] + O2 = 6beta,16alpha,17alpha-trihydroxyprogesterone + oxidized [NADPH--hemoprotein reductase] + H2O + H(+). It carries out the reaction 17alpha-hydroxypregnenolone + reduced [NADPH--hemoprotein reductase] + O2 = 3beta-hydroxyandrost-5-en-17-one + acetate + oxidized [NADPH--hemoprotein reductase] + H2O + 2 H(+). The enzyme catalyses 16alpha,17alpha-dihydroxypregnenolone + reduced [NADPH--hemoprotein reductase] + O2 = 3beta,16alpha-dihydroxy-androst-5-en-17-one + acetate + oxidized [NADPH--hemoprotein reductase] + H2O + 2 H(+). It catalyses the reaction 3beta-hydroxyandrost-5-en-17-one + reduced [NADPH--hemoprotein reductase] + O2 = 3beta,16alpha-dihydroxy-androst-5-en-17-one + oxidized [NADPH--hemoprotein reductase] + H2O + H(+). The catalysed reaction is androst-4-ene-3,17-dione + reduced [NADPH--hemoprotein reductase] + O2 = 16alpha-hydroxyandrost-4-ene-3,17-dione + oxidized [NADPH--hemoprotein reductase] + H2O + H(+). Its pathway is steroid hormone biosynthesis. It functions in the pathway steroid biosynthesis; glucocorticoid biosynthesis. Its activity is regulated as follows. Regulated predominantly by intracellular cAMP levels. The 17,20-lyase activity is stimulated by cytochrome b5, which acts as an allosteric effector increasing the Vmax of the lyase activity. In terms of biological role, a cytochrome P450 monooxygenase involved in corticoid and androgen biosynthesis. Catalyzes 17-alpha hydroxylation of C21 steroids, which is common for both pathways. A second oxidative step, required only for androgen synthesis, involves an acyl-carbon cleavage. The 17-alpha hydroxy intermediates, as part of adrenal glucocorticoids biosynthesis pathway, are precursors of cortisol. Hydroxylates steroid hormones, pregnenolone and progesterone to form 17-alpha hydroxy metabolites, followed by the cleavage of the C17-C20 bond to form C19 steroids, dehydroepiandrosterone (DHEA) and androstenedione. Has 16-alpha hydroxylase activity. Catalyzes 16-alpha hydroxylation of 17-alpha hydroxy pregnenolone, followed by the cleavage of the C17-C20 bond to form 16-alpha-hydroxy DHEA. Also 16-alpha hydroxylates androgens, relevant for estriol synthesis. Mechanistically, uses molecular oxygen inserting one oxygen atom into a substrate, and reducing the second into a water molecule, with two electrons provided by NADPH via cytochrome P450 reductase (CPR; NADPH-ferrihemoprotein reductase). The sequence is that of Steroid 17-alpha-hydroxylase/17,20 lyase (CYP17A1) from Sus scrofa (Pig).